The primary structure comprises 149 residues: Large ribosomal subunit protein bL9 (149 aa).

This sequence belongs to the bacterial ribosomal protein bL9 family.

Its function is as follows. Binds to the 23S rRNA. The sequence is that of Large ribosomal subunit protein bL9 from Helicobacter pylori (strain HPAG1).